We begin with the raw amino-acid sequence, 278 residues long: MIPLHENLAGKTAVITGGSGVLCSAMARELARHGMKVAILNRTAEKGQAVVKEITAAGGTACAVAADVLDRMSLERAKEDILGQFGAVDLLINGAGGNHPDAITDVETYEEAGEGQSFFDMDERGFLTVFSTNFTGAFLASQVFGKELLKADSPAIINLSSMSAYSPMTKVPAYSAAKASINNFTMWMAVHFAETGLRVNAIAPGFFLTKQNHDLLINQDGTFTSRSHKIIAGTPMKRFGKPEDLLGTLLWLADESYSGFVTGITVPVDGGFMAYSGV.

The protein belongs to the short-chain dehydrogenases/reductases (SDR) family.

This is an uncharacterized protein from Bacillus subtilis (strain 168).